A 953-amino-acid polypeptide reads, in one-letter code: Homeobox protein LUMINIDEPENDENS (953 aa).

Positions Lys63 to Gln123 form a DNA-binding region, homeobox. The tract at residues Glu404 to Ser430 is disordered. Over residues Ser414–Arg425 the composition is skewed to polar residues. 5 consecutive repeat copies span residues Gln498–Gly502, Gln507–Gly511, Gln516–Gly520, Gln525–Gly529, and Gln534–Gly538. The tract at residues Gln498–Gly538 is 5 X 5 AA repeats of Q-P-V-N-G. Disordered stretches follow at residues Asn606–Asp668, Ala733–Met763, and Val861–Arg953. Basic and acidic residues predominate over residues Lys608 to Thr623. Over residues Pro651–Glu661 the composition is skewed to low complexity. The span at Ala733–Lys742 shows a compositional bias: polar residues. Residues Ser869–His884 are compositionally biased toward low complexity. Composition is skewed to polar residues over residues Glu888–Ala934 and Thr942–Arg953.

In terms of assembly, interacts with SUF4. Expressed in shoot apex, root apex, leaf primordia and floral buds.

Its subcellular location is the nucleus. In terms of biological role, seems to play a role in the regulation of flowering time in the autonomous flowering pathway by repressing FLOWERING LOCUS C expression. The polypeptide is Homeobox protein LUMINIDEPENDENS (LD) (Arabidopsis thaliana (Mouse-ear cress)).